The sequence spans 242 residues: ATP synthase subunit a (242 aa).

Helical transmembrane passes span isoleucine 23 to leucine 43, valine 62 to leucine 82, tyrosine 84 to leucine 104, histidine 113 to phenylalanine 133, isoleucine 143 to phenylalanine 163, leucine 176 to lysine 196, and leucine 201 to isoleucine 221.

Belongs to the ATPase A chain family. In terms of assembly, F-type ATPases have 2 components, CF(1) - the catalytic core - and CF(0) - the membrane proton channel. CF(1) has five subunits: alpha(3), beta(3), gamma(1), delta(1), epsilon(1). CF(0) has three main subunits: a(1), b(2) and c(9-12). The alpha and beta chains form an alternating ring which encloses part of the gamma chain. CF(1) is attached to CF(0) by a central stalk formed by the gamma and epsilon chains, while a peripheral stalk is formed by the delta and b chains.

Its subcellular location is the cell inner membrane. In terms of biological role, key component of the proton channel; it plays a direct role in the translocation of protons across the membrane. This is ATP synthase subunit a from Anaplasma phagocytophilum (strain HZ).